The sequence spans 160 residues: MSDSERTVDIQVVPPYAAYVDSALIEQAVECTLQMEQVAGPVEVGILITDDAGLQRLNQAYRGVDAPTDVLSFAEADDDSAFVRPPDAPRYLGDIAISWERVVAQAAEYGHSRERELAFLVVHGMLHLLGYDHERSPADEADMRAREEEILRALGLSREE.

Residues His123, His127, and His133 each contribute to the Zn(2+) site.

It belongs to the endoribonuclease YbeY family. Zn(2+) is required as a cofactor.

The protein resides in the cytoplasm. Its function is as follows. Single strand-specific metallo-endoribonuclease involved in late-stage 70S ribosome quality control and in maturation of the 3' terminus of the 16S rRNA. The chain is Endoribonuclease YbeY from Roseiflexus sp. (strain RS-1).